A 424-amino-acid polypeptide reads, in one-letter code: Histidine--tRNA ligase (424 aa).

This sequence belongs to the class-II aminoacyl-tRNA synthetase family. As to quaternary structure, homodimer.

Its subcellular location is the cytoplasm. It catalyses the reaction tRNA(His) + L-histidine + ATP = L-histidyl-tRNA(His) + AMP + diphosphate + H(+). The polypeptide is Histidine--tRNA ligase (Salmonella typhi).